Here is a 332-residue protein sequence, read N- to C-terminus: Glycerol-3-phosphate dehydrogenase [NAD(P)+] (332 aa).

Residues Ser-11, Phe-12, Lys-32, and Lys-106 each contribute to the NADPH site. Residues Lys-106, Gly-137, and Ser-139 each contribute to the sn-glycerol 3-phosphate site. Ala-141 is an NADPH binding site. Lys-192, Asp-245, Ser-255, Arg-256, and Asn-257 together coordinate sn-glycerol 3-phosphate. Catalysis depends on Lys-192, which acts as the Proton acceptor. Position 256 (Arg-256) interacts with NADPH. Positions 280 and 282 each coordinate NADPH.

It belongs to the NAD-dependent glycerol-3-phosphate dehydrogenase family.

It is found in the cytoplasm. The enzyme catalyses sn-glycerol 3-phosphate + NAD(+) = dihydroxyacetone phosphate + NADH + H(+). The catalysed reaction is sn-glycerol 3-phosphate + NADP(+) = dihydroxyacetone phosphate + NADPH + H(+). It participates in membrane lipid metabolism; glycerophospholipid metabolism. Catalyzes the reduction of the glycolytic intermediate dihydroxyacetone phosphate (DHAP) to sn-glycerol 3-phosphate (G3P), the key precursor for phospholipid synthesis. The polypeptide is Glycerol-3-phosphate dehydrogenase [NAD(P)+] (Staphylococcus epidermidis (strain ATCC 12228 / FDA PCI 1200)).